The chain runs to 204 residues: Transcriptional regulator GfcR 1 (204 aa).

This sequence belongs to the purine/pyrimidine phosphoribosyltransferase family. GfcR subfamily.

The protein is Transcriptional regulator GfcR 1 of Methanosarcina barkeri (strain Fusaro / DSM 804).